Reading from the N-terminus, the 229-residue chain is Peptidase E (229 aa).

Catalysis depends on charge relay system residues serine 120, aspartate 135, and histidine 157.

Belongs to the peptidase S51 family.

The protein resides in the cytoplasm. The catalysed reaction is Dipeptidase E catalyzes the hydrolysis of dipeptides Asp-|-Xaa. It does not act on peptides with N-terminal Glu, Asn or Gln, nor does it cleave isoaspartyl peptides.. Functionally, hydrolyzes dipeptides containing N-terminal aspartate residues. May play a role in allowing the cell to use peptide aspartate to spare carbon otherwise required for the synthesis of the aspartate family of amino acids. The polypeptide is Peptidase E (Shigella flexneri serotype 5b (strain 8401)).